A 300-amino-acid polypeptide reads, in one-letter code: Cysteine-rich venom protein (300 aa).

An N-terminal signal peptide occupies residues M1–G21. Residues R22–R24 constitute a propeptide that is removed on maturation. Residues L62–Y183 form the SCP domain.

In terms of processing, contains 11 disulfide bonds. Expressed by the venom duct.

It is found in the secreted. Protease responsible for cleaving the conotoxins from their propeptide precursors. The target propeptide requires minimum four residues including a leucine N-terminal of the cleavage site for efficient substrate processing (example: Xaa-Xaa-Xaa-Leu-Asn-Lys-Arg-toxin). The protein is Cysteine-rich venom protein of Conus textile (Cloth-of-gold cone).